A 479-amino-acid polypeptide reads, in one-letter code: Adenosylhomocysteinase (479 aa).

The substrate site is built by Thr-56, Asp-133, and Glu-199. 200 to 202 is a binding site for NAD(+); it reads TTT. Residues Lys-229 and Asp-233 each contribute to the substrate site. Residues Asn-234, 263–268, Glu-286, Asn-321, 342–344, and Asn-390 each bind NAD(+); these read GYGDVG and IGH.

Belongs to the adenosylhomocysteinase family. Homotetramer. The cofactor is NAD(+).

The enzyme catalyses S-adenosyl-L-homocysteine + H2O = L-homocysteine + adenosine. It participates in amino-acid biosynthesis; L-homocysteine biosynthesis; L-homocysteine from S-adenosyl-L-homocysteine: step 1/1. Adenosylhomocysteine is a competitive inhibitor of S-adenosyl-L-methionine-dependent methyl transferase reactions; therefore adenosylhomocysteinase may play a key role in the control of methylations via regulation of the intracellular concentration of adenosylhomocysteine. This is Adenosylhomocysteinase from Plasmodium yoelii yoelii.